The chain runs to 309 residues: MPIKIPDTLPAFDALVHEGVRVMTETAAIRQDIRPLQIALLNLMPNKIKTEVQFARLIGASPLQVELTLVRIGGHKAKNTPEEHLLSFYQTWEEVKHRKFDGLIITGAPVETLPFEDVTYWSEMQQIFDWTQTNVHTTMNVCWGAMAAIYHFHKVPKHGLKEKAFGVFRHRNLAPSSIYLNGFSDDFQVPVSRWTEVRRADIEKVPDLNILMESDEMGVCLVQEDKGNRLYMFNHVEYDSTSLADEYFRDVSAGIPIRLPYDYFPHNDDTLTPLNRWRSHAHLLFGNWINEMYQTTSYDLNDIGKGRGI.

C142 serves as the catalytic Acyl-thioester intermediate. 2 residues coordinate substrate: K163 and S192. H235 functions as the Proton acceptor in the catalytic mechanism. E237 is a catalytic residue. R249 provides a ligand contact to substrate.

Belongs to the MetA family.

It is found in the cytoplasm. It catalyses the reaction L-homoserine + acetyl-CoA = O-acetyl-L-homoserine + CoA. It participates in amino-acid biosynthesis; L-methionine biosynthesis via de novo pathway; O-acetyl-L-homoserine from L-homoserine: step 1/1. Functionally, transfers an acetyl group from acetyl-CoA to L-homoserine, forming acetyl-L-homoserine. The sequence is that of Homoserine O-acetyltransferase from Allorhizobium ampelinum (strain ATCC BAA-846 / DSM 112012 / S4) (Agrobacterium vitis (strain S4)).